Here is a 529-residue protein sequence, read N- to C-terminus: Bifunctional purine biosynthesis protein PurH (529 aa).

The MGS-like domain occupies 1 to 148 (MQQRRPVRRA…KNHKDVAIVV (148 aa)).

This sequence belongs to the PurH family.

It catalyses the reaction (6R)-10-formyltetrahydrofolate + 5-amino-1-(5-phospho-beta-D-ribosyl)imidazole-4-carboxamide = 5-formamido-1-(5-phospho-D-ribosyl)imidazole-4-carboxamide + (6S)-5,6,7,8-tetrahydrofolate. It carries out the reaction IMP + H2O = 5-formamido-1-(5-phospho-D-ribosyl)imidazole-4-carboxamide. The protein operates within purine metabolism; IMP biosynthesis via de novo pathway; 5-formamido-1-(5-phospho-D-ribosyl)imidazole-4-carboxamide from 5-amino-1-(5-phospho-D-ribosyl)imidazole-4-carboxamide (10-formyl THF route): step 1/1. It participates in purine metabolism; IMP biosynthesis via de novo pathway; IMP from 5-formamido-1-(5-phospho-D-ribosyl)imidazole-4-carboxamide: step 1/1. This chain is Bifunctional purine biosynthesis protein PurH, found in Salmonella newport (strain SL254).